A 639-amino-acid polypeptide reads, in one-letter code: Elongation factor 4 (639 aa).

Residues 39–220 form the tr-type G domain; it reads AQIRNFCIIA…EVVRLVPPPT (182 aa). GTP-binding positions include 51–56 and 167–170; these read DHGKST and NKID.

Belongs to the TRAFAC class translation factor GTPase superfamily. Classic translation factor GTPase family. LepA subfamily.

The protein resides in the cell membrane. It catalyses the reaction GTP + H2O = GDP + phosphate + H(+). Its function is as follows. Required for accurate and efficient protein synthesis under certain stress conditions. May act as a fidelity factor of the translation reaction, by catalyzing a one-codon backward translocation of tRNAs on improperly translocated ribosomes. Back-translocation proceeds from a post-translocation (POST) complex to a pre-translocation (PRE) complex, thus giving elongation factor G a second chance to translocate the tRNAs correctly. Binds to ribosomes in a GTP-dependent manner. The chain is Elongation factor 4 from Mycobacterium sp. (strain JLS).